The sequence spans 105 residues: Large ribosomal subunit protein uL24 (105 aa).

It belongs to the universal ribosomal protein uL24 family. Part of the 50S ribosomal subunit.

Functionally, one of two assembly initiator proteins, it binds directly to the 5'-end of the 23S rRNA, where it nucleates assembly of the 50S subunit. In terms of biological role, one of the proteins that surrounds the polypeptide exit tunnel on the outside of the subunit. The polypeptide is Large ribosomal subunit protein uL24 (Sorangium cellulosum (strain So ce56) (Polyangium cellulosum (strain So ce56))).